The following is a 399-amino-acid chain: Subtilisin-like protease 4 (399 aa).

A signal peptide spans 1–19 (MVCLKTLSVFLAAFAVADA). Positions 20-118 (RAVFKTQSNK…VEQDQVVRIS (99 aa)) are excised as a propeptide. Residues 38 to 117 (YIVVMKDGVS…YVEQDQVVRI (80 aa)) enclose the Inhibitor I9 domain. The region spanning 128 to 399 (SWGLGRVSHR…NRLLYNGSGQ (272 aa)) is the Peptidase S8 domain. Residues Asp160 and His191 each act as charge relay system in the active site. A glycan (N-linked (GlcNAc...) asparagine) is linked at Asn252. Ser346 serves as the catalytic Charge relay system. The span at 380 to 392 (AISNPGSGTTNRL) shows a compositional bias: polar residues. The disordered stretch occupies residues 380–399 (AISNPGSGTTNRLLYNGSGQ). A glycan (N-linked (GlcNAc...) asparagine) is linked at Asn395.

This sequence belongs to the peptidase S8 family.

It localises to the secreted. Its function is as follows. Secreted subtilisin-like serine protease with keratinolytic activity that contributes to pathogenicity. The polypeptide is Subtilisin-like protease 4 (SUB4) (Arthroderma gypseum (strain ATCC MYA-4604 / CBS 118893) (Microsporum gypseum)).